The sequence spans 622 residues: DNA-directed RNA polymerase subunit gamma (622 aa).

Residues Cys-70, Cys-72, Cys-85, and Cys-88 each coordinate Zn(2+). Residues Asp-466, Asp-468, and Asp-470 each contribute to the Mg(2+) site.

This sequence belongs to the RNA polymerase beta' chain family. RpoC1 subfamily. As to quaternary structure, in cyanobacteria the RNAP catalytic core is composed of 2 alpha, 1 beta, 1 beta', 1 gamma and 1 omega subunit. When a sigma factor is associated with the core the holoenzyme is formed, which can initiate transcription. It depends on Mg(2+) as a cofactor. Zn(2+) serves as cofactor.

The catalysed reaction is RNA(n) + a ribonucleoside 5'-triphosphate = RNA(n+1) + diphosphate. Functionally, DNA-dependent RNA polymerase catalyzes the transcription of DNA into RNA using the four ribonucleoside triphosphates as substrates. The chain is DNA-directed RNA polymerase subunit gamma from Cyanothece sp. (strain PCC 7425 / ATCC 29141).